The following is a 193-amino-acid chain: Holliday junction branch migration complex subunit RuvA (193 aa).

Residues 1–64 are domain I; sequence MIGRIQGTLV…EDAQQLFGFA (64 aa). The segment at 65–139 is domain II; the sequence is TETEREAFRQ…GKLAPDLGVA (75 aa). The segment at 139 to 143 is flexible linker; sequence AGGKP. Residues 144-193 are domain III; that stretch reads QAIETSSEVLQALLALGYSEKEALLALKQIPADTSISDGIRMGLKYLSKA.

Belongs to the RuvA family. As to quaternary structure, homotetramer. Forms an RuvA(8)-RuvB(12)-Holliday junction (HJ) complex. HJ DNA is sandwiched between 2 RuvA tetramers; dsDNA enters through RuvA and exits via RuvB. An RuvB hexamer assembles on each DNA strand where it exits the tetramer. Each RuvB hexamer is contacted by two RuvA subunits (via domain III) on 2 adjacent RuvB subunits; this complex drives branch migration. In the full resolvosome a probable DNA-RuvA(4)-RuvB(12)-RuvC(2) complex forms which resolves the HJ.

It localises to the cytoplasm. The RuvA-RuvB-RuvC complex processes Holliday junction (HJ) DNA during genetic recombination and DNA repair, while the RuvA-RuvB complex plays an important role in the rescue of blocked DNA replication forks via replication fork reversal (RFR). RuvA specifically binds to HJ cruciform DNA, conferring on it an open structure. The RuvB hexamer acts as an ATP-dependent pump, pulling dsDNA into and through the RuvAB complex. HJ branch migration allows RuvC to scan DNA until it finds its consensus sequence, where it cleaves and resolves the cruciform DNA. The polypeptide is Holliday junction branch migration complex subunit RuvA (Polynucleobacter necessarius subsp. necessarius (strain STIR1)).